Consider the following 169-residue polypeptide: Probable actin-related protein 2/3 complex subunit 4 (169 aa).

It belongs to the ARPC4 family. Component of the Arp2/3 complex, at least composed of arx-1, arx-2, arx-4 and arx-6.

The protein resides in the cytoplasm. Its subcellular location is the cytoskeleton. Its function is as follows. Functions as actin-binding component of the Arp2/3 complex which is involved in regulation of actin polymerization and together with an activating nucleation-promoting factor (NPF) mediates the formation of branched actin networks. Seems to contact the mother actin filament. Plays a role in time-dependent memory loss and the retention of conditioned behavior over time. In Caenorhabditis elegans, this protein is Probable actin-related protein 2/3 complex subunit 4.